The sequence spans 200 residues: Beta-1,6-glucan synthesis-associated protein KEG1 (200 aa).

Residues 1-15 (MAGIKLTHKLYQYYQ) are Lumenal-facing. A helical transmembrane segment spans residues 16–36 (LATSFLYAALLIRWLILMPLV). Topologically, residues 37–44 (GSRFLPGG) are cytoplasmic. A helical transmembrane segment spans residues 45–65 (IHEFLIYLMFYSSIMEVIWLL). Over 66–82 (RFHGFKYGLLSRTFLKD) the chain is Lumenal. A helical transmembrane segment spans residues 83–103 (LNFIYLVSVIHFYDDYEHALI). The Cytoplasmic portion of the chain corresponds to 104–145 (LKNASYSSFIISLSLSQAYCHWCKLFKRKGVKERTLVWKVNT). Residues 146-166 (FVTLPILYLSEFALLLLNIQV) traverse the membrane as a helical segment. Over 167 to 173 (KNYHSTP) the chain is Lumenal. The chain crosses the membrane as a helical span at residues 174–194 (TLDIINRVVLLAYFPVLLTAY). Over 195–200 (KKLLTK) the chain is Cytoplasmic.

As to quaternary structure, interacts with KRE6.

It localises to the endoplasmic reticulum membrane. Involved in the biosynthesis of (1-&gt;6)-beta-D-glucan polymers of the cell wall. Required for viability. Involved in maintaining chromosome stability. The sequence is that of Beta-1,6-glucan synthesis-associated protein KEG1 (KEG1) from Saccharomyces cerevisiae (strain ATCC 204508 / S288c) (Baker's yeast).